We begin with the raw amino-acid sequence, 362 residues long: Patr class I histocompatibility antigen, B-2 alpha chain (362 aa).

Positions 1 to 24 are cleaved as a signal peptide; sequence MQVTAPRTVLLLLSAALALTETWA. The segment at 25–114 is alpha-1; that stretch reads GSHSMKYFYT…LRGYYNQSEA (90 aa). The Extracellular segment spans residues 25–308; sequence GSHSMKYFYT…EPSSQSTIPI (284 aa). The N-linked (GlcNAc...) asparagine glycan is linked to N110. Positions 115–206 are alpha-2; it reads GSHIIQRMYG…ENGKETLQRA (92 aa). 2 disulfide bridges follow: C125–C188 and C227–C283. The alpha-3 stretch occupies residues 207 to 298; sequence DPPKTHVTHH…GLPKPLTLRW (92 aa). An Ig-like C1-type domain is found at 209 to 295; that stretch reads PKTHVTHHPI…QHEGLPKPLT (87 aa). The interval 299 to 308 is connecting peptide; that stretch reads EPSSQSTIPI. A helical membrane pass occupies residues 309 to 332; sequence VGIVAGLAVLAVVVIGAVVAAVMC. The Cytoplasmic portion of the chain corresponds to 333 to 362; it reads RRKSSGGKGGSYSQAASSDSAQGSDVSLTA. Residues 336–362 form a disordered region; the sequence is SSGGKGGSYSQAASSDSAQGSDVSLTA. Residues 343 to 362 show a composition bias toward low complexity; that stretch reads SYSQAASSDSAQGSDVSLTA.

Belongs to the MHC class I family. Heterodimer of an alpha chain and a beta chain (beta-2-microglobulin).

The protein resides in the membrane. Functionally, involved in the presentation of foreign antigens to the immune system. The sequence is that of Patr class I histocompatibility antigen, B-2 alpha chain from Pan troglodytes (Chimpanzee).